A 466-amino-acid chain; its full sequence is Cysteine--tRNA ligase (466 aa).

Cysteine 33 is a Zn(2+) binding site. Residues 35–45 (PTVYDYAHIGN) carry the 'HIGH' region motif. Zn(2+) contacts are provided by cysteine 221, histidine 246, and glutamate 250. The 'KMSKS' region motif lies at 279 to 283 (KMSKS). Lysine 282 lines the ATP pocket.

It belongs to the class-I aminoacyl-tRNA synthetase family. In terms of assembly, monomer. The cofactor is Zn(2+).

It is found in the cytoplasm. It catalyses the reaction tRNA(Cys) + L-cysteine + ATP = L-cysteinyl-tRNA(Cys) + AMP + diphosphate. This chain is Cysteine--tRNA ligase, found in Rhizobium meliloti (strain 1021) (Ensifer meliloti).